A 362-amino-acid chain; its full sequence is MAESTATTTAVPPPAEESWNADSEDVHQFYWTYTEEPHKSRRAAILKAHPEIASLNGYEPLTKWIVLGVVSLQFTCAYLLSQSSLLSWKFFLTAYFIGAFCNQNLFLAIHELSHNLGFKKTLYNRAYCLFANLPVGAPFAASFRPYHMEHHAYQGVDGMDTDLPTRAELILFDNVLGKAFFCTFQLLFYAFRPLVVRRLPFTLMHFWNIIVQFSFDYLVVRYVGWRALAYFFMSSFLAGSLHPTAGHFLSEHYNMTRTRLIASGPGKETPLETFSYYGPLNFFVYNAGYHIEHHDFPYVAWTRIGKVRELAPEFYDNIPDCKSWCGIIYQFITDSNVGMWCRVKRKQKHADIPTKSMHLHVS.

Residues 1 to 10 are compositionally biased toward low complexity; that stretch reads MAESTATTTA. Positions 1-20 are disordered; sequence MAESTATTTAVPPPAEESWN. Helical transmembrane passes span 60-80, 90-110, and 121-143; these read PLTK…AYLL, FFLT…LAIH, and TLYN…AASF. Positions 110-114 match the Histidine box-1 motif; that stretch reads HELSH. The Histidine box-2 signature appears at 147–151; it reads HMEHH. A run of 3 helical transmembrane segments spans residues 169–189, 200–220, and 228–248; these read LILF…LLFY, PFTL…YLVV, and LAYF…AGHF. The Histidine box-3 signature appears at 290-294; it reads HIEHH.

Belongs to the fatty acid desaturase type 1 family. DEGS subfamily.

The protein localises to the membrane. It catalyses the reaction an N-acylsphinganine + 2 Fe(II)-[cytochrome b5] + O2 + 2 H(+) = an N-acylsphing-4-enine + 2 Fe(III)-[cytochrome b5] + 2 H2O. Its pathway is lipid metabolism; sphingolipid metabolism. Its function is as follows. Delta(4)-fatty-acid desaturase which introduces a double bond at the 4-position in the long-chain base (LCB) of ceramides. Required for sphingosine biosynthesis. In Schizosaccharomyces pombe (strain 972 / ATCC 24843) (Fission yeast), this protein is Sphingolipid delta(4)-desaturase (dsd1).